A 215-amino-acid polypeptide reads, in one-letter code: ATP-dependent Clp protease proteolytic subunit 1 (215 aa).

Residue Ser-108 is the Nucleophile of the active site. His-133 is a catalytic residue.

The protein belongs to the peptidase S14 family. As to quaternary structure, fourteen ClpP subunits assemble into 2 heptameric rings which stack back to back to give a disk-like structure with a central cavity, resembling the structure of eukaryotic proteasomes.

It localises to the cytoplasm. It carries out the reaction Hydrolysis of proteins to small peptides in the presence of ATP and magnesium. alpha-casein is the usual test substrate. In the absence of ATP, only oligopeptides shorter than five residues are hydrolyzed (such as succinyl-Leu-Tyr-|-NHMec, and Leu-Tyr-Leu-|-Tyr-Trp, in which cleavage of the -Tyr-|-Leu- and -Tyr-|-Trp bonds also occurs).. Its function is as follows. Cleaves peptides in various proteins in a process that requires ATP hydrolysis. Has a chymotrypsin-like activity. Plays a major role in the degradation of misfolded proteins. The polypeptide is ATP-dependent Clp protease proteolytic subunit 1 (Paraburkholderia xenovorans (strain LB400)).